Here is a 394-residue protein sequence, read N- to C-terminus: Phosphopentomutase (394 aa).

Residues Asp-13, Asp-286, His-291, Asp-327, His-328, and His-339 each coordinate Mn(2+).

Belongs to the phosphopentomutase family. Mn(2+) is required as a cofactor.

The protein localises to the cytoplasm. The enzyme catalyses 2-deoxy-alpha-D-ribose 1-phosphate = 2-deoxy-D-ribose 5-phosphate. It catalyses the reaction alpha-D-ribose 1-phosphate = D-ribose 5-phosphate. It participates in carbohydrate degradation; 2-deoxy-D-ribose 1-phosphate degradation; D-glyceraldehyde 3-phosphate and acetaldehyde from 2-deoxy-alpha-D-ribose 1-phosphate: step 1/2. Functionally, isomerase that catalyzes the conversion of deoxy-ribose 1-phosphate (dRib-1-P) and ribose 1-phosphate (Rib-1-P) to deoxy-ribose 5-phosphate (dRib-5-P) and ribose 5-phosphate (Rib-5-P), respectively. The sequence is that of Phosphopentomutase from Bacillus cereus (strain ATCC 10987 / NRS 248).